Reading from the N-terminus, the 923-residue chain is RNA polymerase-associated protein RapA (923 aa).

Residues 162-332 enclose the Helicase ATP-binding domain; the sequence is EVGNRVNPRV…FARLRLLDPE (171 aa). 175–182 serves as a coordination point for ATP; sequence DEVGLGKT. The short motif at 278 to 281 is the DEAH box element; that stretch reads DEAH. Positions 443-597 constitute a Helicase C-terminal domain; sequence KIDWLIDFLK…TCPMGMALFS (155 aa).

The protein belongs to the SNF2/RAD54 helicase family. RapA subfamily. Interacts with the RNAP. Has a higher affinity for the core RNAP than for the holoenzyme. Its ATPase activity is stimulated by binding to RNAP.

Functionally, transcription regulator that activates transcription by stimulating RNA polymerase (RNAP) recycling in case of stress conditions such as supercoiled DNA or high salt concentrations. Probably acts by releasing the RNAP, when it is trapped or immobilized on tightly supercoiled DNA. Does not activate transcription on linear DNA. Probably not involved in DNA repair. The chain is RNA polymerase-associated protein RapA from Haemophilus influenzae (strain ATCC 51907 / DSM 11121 / KW20 / Rd).